We begin with the raw amino-acid sequence, 351 residues long: Protein-glutamate methylesterase/protein-glutamine glutaminase (351 aa).

The Response regulatory domain occupies 8 to 125; it reads TVVVVDDSLT…GEDPFAGLGD (118 aa). Position 59 is a 4-aspartylphosphate (Asp59). Residues 151-345 enclose the CheB-type methylesterase domain; that stretch reads PKIGTVVGIG…PAILNLCERR (195 aa). Catalysis depends on residues Ser162, His188, and Asp287.

It belongs to the CheB family. In terms of processing, phosphorylated by CheA. Phosphorylation of the N-terminal regulatory domain activates the methylesterase activity.

Its subcellular location is the cytoplasm. The enzyme catalyses [protein]-L-glutamate 5-O-methyl ester + H2O = L-glutamyl-[protein] + methanol + H(+). The catalysed reaction is L-glutaminyl-[protein] + H2O = L-glutamyl-[protein] + NH4(+). Its function is as follows. Involved in chemotaxis. Part of a chemotaxis signal transduction system that modulates chemotaxis in response to various stimuli. Catalyzes the demethylation of specific methylglutamate residues introduced into the chemoreceptors (methyl-accepting chemotaxis proteins or MCP) by CheR. Also mediates the irreversible deamidation of specific glutamine residues to glutamic acid. This chain is Protein-glutamate methylesterase/protein-glutamine glutaminase, found in Gluconobacter oxydans (strain 621H) (Gluconobacter suboxydans).